The following is a 663-amino-acid chain: Polyunsaturated fatty acid lipoxygenase ALOX15 (663 aa).

Residues glycine 2–arginine 115 form the PLAT domain. The region spanning threonine 116–isoleucine 663 is the Lipoxygenase domain. Residues histidine 361, histidine 366, histidine 541, histidine 545, and isoleucine 663 each coordinate Fe cation.

It belongs to the lipoxygenase family. In terms of assembly, interacts with PEBP1; in response to IL13/interleukin-13, prevents the interaction of PEBP1 with RAF1 to activate the ERK signaling cascade. Fe cation serves as cofactor.

The protein localises to the cytoplasm. The protein resides in the cytosol. It localises to the cell membrane. Its subcellular location is the lipid droplet. It carries out the reaction (5Z,8Z,11Z,14Z)-eicosatetraenoate + O2 = (12S)-hydroperoxy-(5Z,8Z,10E,14Z)-eicosatetraenoate. It catalyses the reaction (5Z,8Z,11Z,14Z)-eicosatetraenoate + O2 = (15S)-hydroperoxy-(5Z,8Z,11Z,13E)-eicosatetraenoate. The catalysed reaction is (9Z,12Z)-octadecadienoate + O2 = (13S)-hydroperoxy-(9Z,11E)-octadecadienoate. The enzyme catalyses (5Z,8Z,11Z,14Z)-eicosatetraenoate + 2 O2 = (14R,15S)-dihydroperoxy-(5Z,8Z,10E,12E)-eicosatetraenoate. It carries out the reaction (5Z,8Z,11Z,14Z)-eicosatetraenoate + 2 O2 = (8S,15S)-dihydroperoxy-(5Z,9E,11Z,13E)-eicosatetraenoate. It catalyses the reaction (14S,15R)-epoxy-(5Z,8Z,11Z)-eicosatrienoate + O2 = (8S)-hydroperoxy-(14S,15R)-epoxy-(5Z,9E,11Z)-eicosatrienoate. The catalysed reaction is (14S,15R)-epoxy-(5Z,8Z,11Z)-eicosatrienoate + O2 = (12S)-hydroperoxy-(14S,15R)-epoxy-(5Z,8Z,10E)-eicosatrienoate. The enzyme catalyses (14R,15S)-epoxy-(5Z,8Z,11Z)-eicosatrienoate + O2 = (5S)-hydroperoxy-(14R,15S)-epoxy-(6E,8Z,11Z)-eicosatrienoate. It carries out the reaction (14R,15S)-epoxy-(5Z,8Z,11Z)-eicosatrienoate + O2 = (12S)-hydroperoxy-(14R,15S)-epoxy-(5Z,8Z,10E)-eicosatrienoate. It catalyses the reaction (15R)-hydroperoxy-(5Z,8Z,11Z,13E)-eicosatetraenoate = 15-oxo-(5Z,8Z,11Z,13E)-eicosatetraenoate + H2O. The catalysed reaction is (15S)-hydroperoxy-(5Z,8Z,11Z,13E)-eicosatetraenoate = (14S,15S)-epoxy-(5Z,8Z,10E,12E)-eicosatetraenoate + H2O. The enzyme catalyses (12S)-hydroperoxy-(5Z,8Z,10E,14Z)-eicosatetraenoate = (8S)-hydroxy-(11S,12S)-epoxy-(5Z,9E,14Z)-eicosatrienoate. It carries out the reaction (4Z,7Z,10Z,13Z,16Z,19Z)-docosahexaenoate + O2 = 14-hydroperoxy-(4Z,7Z,10Z,12E,16Z,19Z)-docosahexaenoate. It catalyses the reaction (4Z,7Z,10Z,13Z,16Z)-docosapentaenoate + O2 = 14-hydroperoxy-(4Z,7Z,10Z,12E,16Z)-docosapentaenoate. The catalysed reaction is (7Z,10Z,13Z,16Z,19Z)-docosapentaenoate + O2 = 14-hydroperoxy-(7Z,10Z,12E,16Z,19Z)-docosapentaenoate. The enzyme catalyses (4Z,7Z,10Z,13Z,16Z,19Z)-docosahexaenoate + O2 = (14S)-hydroperoxy-(4Z,7Z,10Z,12E,16Z,19Z)-docosahexaenoate. It carries out the reaction (4Z,7Z,10Z,13Z,16Z,19Z)-docosahexaenoate + O2 = (17S)-hydroperoxy-(4Z,7Z,10Z,13Z,15E,19Z)-docosahexaenoate. It catalyses the reaction (7S)-hydroperoxy-(4Z,8E,10Z,13Z,16Z,19Z)-docosahexaenoate + O2 = (7S,14S)-dihydroperoxy-(4Z,8E,10Z,12E,16Z,19Z)-docosahexaenoate. The catalysed reaction is (7S)-hydroperoxy-(4Z,8E,10Z,13Z,16Z,19Z)-docosahexaenoate + O2 = (7S,17S)-dihydroperoxy-(4Z,8E,10Z,13Z,15E,19Z)-docosahexaenoate. The enzyme catalyses (4Z,7Z,10Z,13Z,16Z,19Z)-docosahexaenoate + O2 = (11S)-hydroperoxy-(4Z,7Z,9E,13Z,16Z,19Z)-docosahexaenoate. It carries out the reaction N-(5Z,8Z,11Z,14Z)-eicosatetraenoyl-taurine + O2 = N-(12S)-hydroperoxy-(5Z,8Z,10E,14Z)-eicosatetraenoyl-taurine. It catalyses the reaction N-(5Z,8Z,11Z,14Z)-eicosatetraenoyl-gamma-aminobutanoate + O2 = N-(12S)-hydroperoxy-(5Z,8Z,10E,14Z)-eicosatetraenoyl-gamma-aminobutanoate. The catalysed reaction is N-(5Z,8Z,11Z,14Z)-eicosatetraenoyl-glycine + O2 = N-(12S)-hydroperoxy-(5Z,8Z,10E,14Z)-eicosatetraenoyl-glycine. The enzyme catalyses N-(5Z,8Z,11Z,14Z)-eicosatetraenoyl-L-alanine + O2 = N-(12S)-hydroperoxy-(5Z,8Z,10E,14Z)-eicosatetraenoyl-alanine. It carries out the reaction N-(5Z,8Z,11Z,14Z)-eicosatetraenoyl-taurine + O2 = N-(15S)-hydroperoxy-(5Z,8Z,11Z,13E)-eicosatetraenoyl-taurine. It catalyses the reaction N-(5Z,8Z,11Z,14Z)-eicosatetraenoyl-gamma-aminobutanoate + O2 = N-(15S)-hydroperoxy-(5Z,8Z,11Z,13E)-eicosatetraenoyl-gamma-aminobutanoate. The catalysed reaction is N-(5Z,8Z,11Z,14Z)-eicosatetraenoyl-glycine + O2 = N-(15S)-hydroperoxy-(5Z,8Z,11Z,13E)-eicosatetraenoyl-glycine. The enzyme catalyses N-(5Z,8Z,11Z,14Z)-eicosatetraenoyl-L-alanine + O2 = N-(15S)-hydroperoxy-(5Z,8Z,11Z,13E)-eicosatetraenoyl-alanine. It participates in lipid metabolism; hydroperoxy eicosatetraenoic acid biosynthesis. Functionally, non-heme iron-containing dioxygenase that catalyzes the stereo-specific peroxidation of free and esterified polyunsaturated fatty acids generating a spectrum of bioactive lipid mediators. It inserts peroxyl groups at C12 or C15 of arachidonate ((5Z,8Z,11Z,14Z)-eicosatetraenoate) producing both 12-hydroperoxyeicosatetraenoate/12-HPETE and 15-hydroperoxyeicosatetraenoate/15-HPETE. It may then act on 12-HPETE to produce hepoxilins, which may show pro-inflammatory properties. Can also peroxidize linoleate ((9Z,12Z)-octadecadienoate) to 13-hydroperoxyoctadecadienoate. May participate in the sequential oxidations of DHA ((4Z,7Z,10Z,13Z,16Z,19Z)-docosahexaenoate) to generate specialized pro-resolving mediators (SPMs)like resolvin D5 ((7S,17S)-diHPDHA) and (7S,14S)-diHPDHA, that actively down-regulate the immune response and have anti-aggregation properties with platelets. Can convert epoxy fatty acids to hydroperoxy-epoxides derivatives followed by an intramolecular nucleophilic substitution leading to the formation of monocyclic endoperoxides. Plays an important role during the maintenance of self-tolerance by peroxidizing membrane-bound phosphatidylethanolamine which can then signal the sorting process for clearance of apoptotic cells during inflammation and prevent an autoimmune response. In addition to its role in the immune and inflammatory responses, this enzyme may play a role in epithelial wound healing in the cornea through production of lipoxin A4 (LXA(4)) and docosahexaenoic acid-derived neuroprotectin D1 (NPD1; 10R,17S-HDHA), both lipid autacoids exhibit anti-inflammatory and neuroprotective properties. Furthermore, it may regulate actin polymerization which is crucial for several biological processes such as the phagocytosis of apoptotic cells. It is also implicated in the generation of endogenous ligands for peroxisome proliferator activated receptor (PPAR-gamma), hence modulating macrophage development and function. It may also exert a negative effect on skeletal development by regulating bone mass through this pathway. As well as participates in ER stress and downstream inflammation in adipocytes, pancreatic islets, and liver. Finally, it is also involved in the cellular response to IL13/interleukin-13. The protein is Polyunsaturated fatty acid lipoxygenase ALOX15 of Sus scrofa (Pig).